The following is a 976-amino-acid chain: Ubiquitin ligase-binding protein BUL1 (976 aa).

Positions 1-65 are disordered; it reads MAKDLNDSGF…SPSLHSPKSW (65 aa). The span at 23 to 39 shows a compositional bias: polar residues; that stretch reads SDFTANSSTTMNVNANT. Residues 53–64 show a composition bias toward low complexity; that stretch reads SSRSPSLHSPKS. Phosphoserine occurs at positions 58 and 70. Disordered stretches follow at residues 82–124, 145–196, and 857–878; these read LAHS…DGDI, PQGN…SSST, and SEDS…ASLT. The short motif at 156–160 is the PY-motif element; it reads FPPSY. A compositionally biased stretch (low complexity) spans 163-176; the sequence is ANNSTATGAAGSSA. Residues 177–196 show a composition bias toward polar residues; sequence DLSHQSLSTDALGATRSSST. The span at 862 to 878 shows a compositional bias: low complexity; that stretch reads SHTGNGSSSSPSSASLT.

Belongs to the BUL1 family. As to quaternary structure, component of the RSP5-BUL1/2 ubiquitin ligase complex composed of at least RSP5 and BUL1 or BUL2.

The protein resides in the cytoplasm. It participates in protein modification; protein ubiquitination. In terms of biological role, component of a RSP5 ubiquitin ligase complex which specifies polyubiquitination and intracellular trafficking of the general amino acid permease GAP1 as well as other permeases such as PMA1. The RSP5-BUL1/2 complex is also necessary for the heat-shock element (HSE)-mediated gene expression, nitrogen starvation GLN3-dependent transcription and pressure-induced differential regulation of the 2 tryptophan permeases TAT1 and TAT2. This is Ubiquitin ligase-binding protein BUL1 (BUL1) from Saccharomyces cerevisiae (strain ATCC 204508 / S288c) (Baker's yeast).